Reading from the N-terminus, the 181-residue chain is Oligoribonuclease (181 aa).

The region spanning 8–171 (LIWIDLEMTG…DDIRESVAEL (164 aa)) is the Exonuclease domain. The active site involves tyrosine 129.

Belongs to the oligoribonuclease family.

It is found in the cytoplasm. In terms of biological role, 3'-to-5' exoribonuclease specific for small oligoribonucleotides. This is Oligoribonuclease from Shigella flexneri.